The chain runs to 91 residues: Uteroglobin (91 aa).

The signal sequence occupies residues 1-21 (MKLTIAIVLVTLTLFCRPAST).

This sequence belongs to the secretoglobin family. As to quaternary structure, antiparallel homodimer; disulfide-linked. Interaction with LMBR1L is controversial.

The protein localises to the secreted. In terms of biological role, binds phosphatidylcholine, phosphatidylinositol, polychlorinated biphenyls (PCB) and weakly progesterone, potent inhibitor of phospholipase A2. This chain is Uteroglobin (SCGB1A1), found in Bos taurus (Bovine).